Reading from the N-terminus, the 254-residue chain is Probable transcriptional regulator ycf27 (254 aa).

A Response regulatory domain is found at 16 to 129 (KVLIVDDEAS…ELEARIRAVL (114 aa)). 4-aspartylphosphate is present on Asp-65. The H-T-H motif DNA-binding region spans 85 to 103 (DVPIIMLTALGDVADRITG). The ompR/PhoB-type DNA-binding region spans 144 to 245 (SGIINFNFLT…ARGTGYLFQR (102 aa)).

It localises to the plastid. It is found in the chloroplast. Its function is as follows. Probable promoter-specific protein mediating the interaction between DNA and RNA polymerase. The protein is Probable transcriptional regulator ycf27 (ycf27) of Guillardia theta (Cryptophyte).